The primary structure comprises 326 residues: Metallophosphoesterase domain-containing protein 1 (326 aa).

It belongs to the UPF0046 family.

In terms of biological role, may have metallophosphoesterase activity (in vitro). This chain is Metallophosphoesterase domain-containing protein 1 (Mpped1), found in Mus musculus (Mouse).